Here is a 60-residue protein sequence, read N- to C-terminus: UPF0434 protein YE1549 (60 aa).

The protein belongs to the UPF0434 family.

In Yersinia enterocolitica serotype O:8 / biotype 1B (strain NCTC 13174 / 8081), this protein is UPF0434 protein YE1549.